The following is a 278-amino-acid chain: HAUS augmin-like complex subunit 1 (278 aa).

Coiled-coil stretches lie at residues 49-79, 124-177, and 249-277; these read RDVY…LMES, SDLF…KVDN, and SLAQ…DMME.

It belongs to the HAUS1 family. Component of the HAUS augmin-like complex. The complex interacts with the gamma-tubulin ring complex and this interaction is required for spindle assembly. Associates with microtubules. The interaction with microtubules is strong during mitosis, while it is weak or absent during interphase. It is unclear whether this interaction is direct or indirect. Interacts with EML3 (phosphorylated at 'Thr-881'). As to expression, widely expressed. Expressed in pancreas, kidney, skeletal muscle, liver and heart. Weakly expressed in lung, brain and placenta.

The protein resides in the cytoplasm. Its subcellular location is the cytoskeleton. The protein localises to the microtubule organizing center. It localises to the centrosome. It is found in the spindle. The protein resides in the spindle pole. Functionally, contributes to mitotic spindle assembly, maintenance of centrosome integrity and completion of cytokinesis as part of the HAUS augmin-like complex. In Homo sapiens (Human), this protein is HAUS augmin-like complex subunit 1 (HAUS1).